A 179-amino-acid chain; its full sequence is Ubiquinol-cytochrome c reductase iron-sulfur subunit (179 aa).

The helical transmembrane segment at F14 to I35 threads the bilayer. The Rieske domain occupies A80 to R173. Residues C118, H120, C137, and H140 each contribute to the [2Fe-2S] cluster site. The cysteines at positions 123 and 139 are disulfide-linked.

The protein belongs to the Rieske iron-sulfur protein family. The main subunits of complex b-c1 are: cytochrome b, cytochrome c1 and the Rieske protein. It depends on [2Fe-2S] cluster as a cofactor.

It localises to the cell membrane. It catalyses the reaction a quinol + 2 Fe(III)-[cytochrome c](out) = a quinone + 2 Fe(II)-[cytochrome c](out) + 2 H(+)(out). Functionally, component of the ubiquinol-cytochrome c reductase complex (complex III or cytochrome b-c1 complex), which is a respiratory chain that generates an electrochemical potential coupled to ATP synthesis. The sequence is that of Ubiquinol-cytochrome c reductase iron-sulfur subunit (petA) from Blastochloris viridis (Rhodopseudomonas viridis).